Consider the following 364-residue polypeptide: Pre-mRNA-splicing factor SLT11 (364 aa).

Residues 331–364 (KSTDNAKNDKKKTSKKVHKDRSKKSKPRANKLTI) are disordered. Residues 339 to 364 (DKKKTSKKVHKDRSKKSKPRANKLTI) show a composition bias toward basic residues.

The protein belongs to the SLT11 family. As to quaternary structure, belongs to the CWC complex (or CEF1-associated complex), a spliceosome subcomplex composed of the U2, U5 and U6 snRNAs and at least BUD13, BUD31, BRR2, CDC40, CEF1, CLF1, CUS1, CWC2, CWC15, CWC21, CWC22, CWC23, CWC24, CWC25, CWC27, ECM2, HSH155, IST3, ISY1, LEA1, MSL1, NTC20, PRP8, PRP9, PRP11, PRP19, PRP21, PRP22, PRP45, PRP46, SLU7, SMB1, SMD1, SMD2, SMD3, SMX2, SMX3, SNT309, SNU114, SPP2, SYF1, SYF2, RSE1 and YJU2. Interacts with SLU7.

It localises to the nucleus. In terms of biological role, involved in pre-mRNA splicing. Facilitates the cooperative formation of U2/U6 helix II in association with stem II in the spliceosome. Binds to RNA. The chain is Pre-mRNA-splicing factor SLT11 (ECM2) from Saccharomyces cerevisiae (strain ATCC 204508 / S288c) (Baker's yeast).